The following is a 385-amino-acid chain: S-adenosylmethionine synthase (385 aa).

H16 contributes to the ATP binding site. D18 serves as a coordination point for Mg(2+). E44 provides a ligand contact to K(+). L-methionine-binding residues include E57 and Q100. The flexible loop stretch occupies residues 100–110 (QSPDINQGVDR). ATP contacts are provided by residues 164–166 (DGK), 230–231 (KF), D239, 245–246 (RK), A262, and K266. Position 239 (D239) interacts with L-methionine. Residue K270 participates in L-methionine binding.

This sequence belongs to the AdoMet synthase family. In terms of assembly, homotetramer; dimer of dimers. It depends on Mg(2+) as a cofactor. K(+) serves as cofactor.

The protein resides in the cytoplasm. It carries out the reaction L-methionine + ATP + H2O = S-adenosyl-L-methionine + phosphate + diphosphate. The protein operates within amino-acid biosynthesis; S-adenosyl-L-methionine biosynthesis; S-adenosyl-L-methionine from L-methionine: step 1/1. In terms of biological role, catalyzes the formation of S-adenosylmethionine (AdoMet) from methionine and ATP. The overall synthetic reaction is composed of two sequential steps, AdoMet formation and the subsequent tripolyphosphate hydrolysis which occurs prior to release of AdoMet from the enzyme. The polypeptide is S-adenosylmethionine synthase (Helicobacter pylori (strain G27)).